Consider the following 264-residue polypeptide: Thymidylate synthase (264 aa).

R21 serves as a coordination point for dUMP. A (6R)-5,10-methylene-5,6,7,8-tetrahydrofolate-binding site is contributed by H51. 126-127 (RR) is a dUMP binding site. The active-site Nucleophile is C146. Residues 166–169 (RSCD), N177, and 207–209 (HLY) each bind dUMP. D169 provides a ligand contact to (6R)-5,10-methylene-5,6,7,8-tetrahydrofolate. Position 263 (A263) interacts with (6R)-5,10-methylene-5,6,7,8-tetrahydrofolate.

Belongs to the thymidylate synthase family. Bacterial-type ThyA subfamily. Homodimer.

The protein localises to the cytoplasm. The catalysed reaction is dUMP + (6R)-5,10-methylene-5,6,7,8-tetrahydrofolate = 7,8-dihydrofolate + dTMP. It participates in pyrimidine metabolism; dTTP biosynthesis. Functionally, catalyzes the reductive methylation of 2'-deoxyuridine-5'-monophosphate (dUMP) to 2'-deoxythymidine-5'-monophosphate (dTMP) while utilizing 5,10-methylenetetrahydrofolate (mTHF) as the methyl donor and reductant in the reaction, yielding dihydrofolate (DHF) as a by-product. This enzymatic reaction provides an intracellular de novo source of dTMP, an essential precursor for DNA biosynthesis. The sequence is that of Thymidylate synthase from Baumannia cicadellinicola subsp. Homalodisca coagulata.